The chain runs to 619 residues: Long-chain fatty acid transport protein 6 (619 aa).

2 helical membrane passes run 22 to 42 (LLFP…RYGI) and 119 to 139 (VHVW…NSNL). An AMP-binding site is contributed by 221 to 232 (YIFTSGTTGLPK).

It belongs to the ATP-dependent AMP-binding enzyme family.

It is found in the cell membrane. It localises to the sarcolemma. The enzyme catalyses a fatty acid(in) = a fatty acid(out). The catalysed reaction is hexadecanoate(out) = hexadecanoate(in). It catalyses the reaction (9Z,12Z)-octadecadienoate(out) = (9Z,12Z)-octadecadienoate(in). It carries out the reaction (9Z)-octadecenoate(out) = (9Z)-octadecenoate(in). The enzyme catalyses a very long-chain fatty acid + ATP + CoA = a very long-chain fatty acyl-CoA + AMP + diphosphate. The catalysed reaction is tetracosanoate + ATP + CoA = tetracosanoyl-CoA + AMP + diphosphate. It catalyses the reaction a long-chain fatty acid + ATP + CoA = a long-chain fatty acyl-CoA + AMP + diphosphate. It carries out the reaction (9Z)-octadecenoate + ATP + CoA = (9Z)-octadecenoyl-CoA + AMP + diphosphate. The enzyme catalyses (5Z,8Z,11Z,14Z)-eicosatetraenoate + ATP + CoA = (5Z,8Z,11Z,14Z)-eicosatetraenoyl-CoA + AMP + diphosphate. Functionally, mediates the import of long-chain fatty acids (LCFA) into the cell by facilitating their transport at the plasma membrane. Also functions as an acyl-CoA ligase catalyzing the ATP-dependent formation of fatty acyl-CoA using LCFA and very-long-chain fatty acids (VLCFA) as substrates. Plays a pivotal role in regulating available LCFA substrates from exogenous sources in tissues undergoing high levels of beta-oxidation such as the heart. In Mus musculus (Mouse), this protein is Long-chain fatty acid transport protein 6 (Slc27a6).